The primary structure comprises 515 residues: 1-pyrroline-5-carboxylate dehydrogenase (515 aa).

Residues E286 and C320 contribute to the active site.

Belongs to the aldehyde dehydrogenase family. RocA subfamily.

It catalyses the reaction L-glutamate 5-semialdehyde + NAD(+) + H2O = L-glutamate + NADH + 2 H(+). It participates in amino-acid degradation; L-proline degradation into L-glutamate; L-glutamate from L-proline: step 2/2. The polypeptide is 1-pyrroline-5-carboxylate dehydrogenase (Bacillus mycoides (strain KBAB4) (Bacillus weihenstephanensis)).